The sequence spans 318 residues: Probable mitochondrial 2-oxoglutarate/malate carrier protein (318 aa).

3 Solcar repeats span residues Gln22–Ile111, Leu119–Leu210, and Asp219–Leu309. A run of 6 helical transmembrane segments spans residues Phe28 to Leu48, Gly79 to Thr99, Ile125 to Thr145, Gly185 to Asp205, Leu225 to Ile245, and Phe281 to Ile301.

The protein belongs to the mitochondrial carrier (TC 2.A.29) family.

It is found in the mitochondrion inner membrane. Functionally, mitochondrial solute carriers shuttle metabolites, nucleotides, and cofactors through the mitochondrial inner membrane. Catalyzes the transport of 2-oxoglutarate across the inner mitochondrial membrane in an electroneutral exchange for malate or other dicarboxylic acids, and plays an important role in several metabolic processes, including the malate-aspartate shuttle, the oxoglutarate/isocitrate shuttle, in gluconeogenesis from lactate, and in nitrogen metabolism. The sequence is that of Probable mitochondrial 2-oxoglutarate/malate carrier protein (ucpC) from Dictyostelium discoideum (Social amoeba).